A 585-amino-acid chain; its full sequence is Protein NRT1/ PTR FAMILY 4.6 (585 aa).

The next 12 membrane-spanning stretches (helical) occupy residues 28–48 (GMLAASFVLVVEILENLAYLA), 75–95 (FMGTAFLLALLGGFLSDAFFS), 96–116 (TFQIFLISASIEFLGLIILTI), 142–162 (AMLFVGLYLVALGVGGIKGSL), 184–204 (FFNYFVFCLACGALVAVTFVV), 211–231 (GWEWGFGVSTIAIFVSILIFL), 343–363 (IVLKMLPIFACTIMLNCCLAQ), 391–411 (IFPVVFIMILAPIYDHLIIPF), 428–448 (IGVGLVLSILAMAVAALVEIK), 465–485 (LPVTFLWIALQYLFLGSADLF), 508–528 (SLSWASLAMGYYLSSVIVSIV), and 554–574 (FYWLMCVLSAANFLHYLFWAM).

The protein belongs to the major facilitator superfamily. Proton-dependent oligopeptide transporter (POT/PTR) (TC 2.A.17) family. As to expression, expressed in root hairs and in epidermis of both root tips and mature regions of roots. Detected in shoots, stems, flowers, siliques and imbibed seeds. Expressed in vascular tissues in cotyledons, trus leaves, hypocotyls, roots and inflorescence stems.

The protein localises to the cell membrane. In terms of biological role, low-affinity proton-dependent nitrate transporter. Involved in constitutive nitrate uptake. Not involved in histidine or dipeptides transport. Involved in (+)-abscisic acid (ABA) transport, but not in gibberellin, indole-3-acetic acid or jasmonic acid import. Mediates cellular ABA uptake. Nitrate does not compete with abscisic acid as a substrate of NPF4.6. The protein is Protein NRT1/ PTR FAMILY 4.6 (NPF4.6) of Arabidopsis thaliana (Mouse-ear cress).